The primary structure comprises 185 residues: UPF0200 protein TK1334 (185 aa).

7-14 (GMPGSGKS) provides a ligand contact to ATP.

The protein belongs to the UPF0200 family.

The protein is UPF0200 protein TK1334 of Thermococcus kodakarensis (strain ATCC BAA-918 / JCM 12380 / KOD1) (Pyrococcus kodakaraensis (strain KOD1)).